The primary structure comprises 545 residues: Membrane protein insertase YidC (545 aa).

6 consecutive transmembrane segments (helical) span residues 10–30 (AVYLSLFFIGIFMLLDDFLFS), 319–339 (LLYFLQVPMQLIMQIFYNVIP), 341–361 (WGLSIMFLTIVVRILIFPLTF), 407–427 (IGGCFPILLQLPVFFALYGLV), 467–487 (ILPFIMMITQLLSTIVSSNVS), and 502–522 (MPIMFFFILYDMPSGLLIYWI).

This sequence belongs to the OXA1/ALB3/YidC family. Type 1 subfamily. In terms of assembly, interacts with the Sec translocase complex via SecD. Specifically interacts with transmembrane segments of nascent integral membrane proteins during membrane integration.

Its subcellular location is the cell inner membrane. In terms of biological role, required for the insertion and/or proper folding and/or complex formation of integral membrane proteins into the membrane. Involved in integration of membrane proteins that insert both dependently and independently of the Sec translocase complex, as well as at least some lipoproteins. Aids folding of multispanning membrane proteins. The protein is Membrane protein insertase YidC of Borrelia recurrentis (strain A1).